Reading from the N-terminus, the 842-residue chain is Cullin-8 (842 aa).

Residues 1 to 50 (MINESVSKREGFHESISRETSASNALGLYNKFNDERNPRYRTMIAELHEF) are required for interaction with MMS1. Residues 755 to 765 (LQSSNTGGERT) show a composition bias toward polar residues. Residues 755–775 (LQSSNTGGERTSSAHHEGSNS) form a disordered region. Lys-791 is covalently cross-linked (Glycyl lysine isopeptide (Lys-Gly) (interchain with G-Cter in NEDD8)).

The protein belongs to the cullin family. In terms of assembly, component of multiple cullin-RING ligases (CRLs) composed of 4 subunits: the RING protein HRT1, the cullin RTT101, a linker protein MMS1, and one of many alternative substrate receptors belonging to a protein family described as DCAF (DDB1- and CUL4-associated factor). Component of a RTT101(MMS1-MMS22) complex with the substrate receptor MMS22. This complex further interacts with RTT107 and CTF4 to form RTT101-MMS1-MMS22-RTT107 and RTT101-MMS1-MMS22-CTF4 complexes respectively. Component of a RTT101(MSS1-CRT10) complex with the substrate receptor CRT10. Component of a RTT101(MSS1-ESC2) complex with the potential substrate receptor ESC2. Component of a RTT101(MSS1-ORC5) complex with the potential substrate receptor ORC5. Interacts (via C-ter) with HRT1; required for ubiquitin-ligase activity. Interacts (via N-ter) with MMS1. In terms of processing, neddylated. HRT1-binding is necessary for RUB1/NEDD8 modification of RTT101. The modification enhances ubiquitin-ligase activity.

It is found in the cytoplasm. It localises to the nucleus. It participates in protein modification; protein ubiquitination. Core component of multiple cullin-RING-based E3 ubiquitin-protein ligase complexes (CRLs), which mediate the ubiquitination of target proteins. As a scaffold protein may contribute to catalysis through positioning of the substrate and the ubiquitin-conjugating enzyme. The CRL associates with CDC34 as the E2 ubiquitin-conjugating enzyme. The functional specificity of the CRL depends on the type of the associated substrate receptor protein. RTT101(MMS1-MMS22) promotes fork progression through damaged DNA or natural pause sites by stabilizing replication proteins like the replication fork-pausing complex (FPC) and leading-strand polymerase at stalled replication forks. RTT101(MMS1-MMS22) ubiquitinates the acetylated histones H3K56ac-H4 at lysine residues H3K121, H3K122 and H3K125. Ubiquitination is required for efficient histone deposition during replication-coupled nucleosome assembly, probably by facilitating the transfer of H3-H4 from ASF1 to other chaperones involved in histone deposition. RTT101(MMS1-CRT10) may regulate nucleotide synthesis through transcriptional regulation of ribonucleotide reductase. RTT101(MMS1) is also involved in the non-functional rRNA decay (NRD) of 25S rRNA through the selective, ubiquitination-dependent degradation of nonfunctional ribosomal particles. Ubiquitinates the FACT (facilitates chromatin transcription) complex subunit SPT16 in an MMS1-independent manner. Involved in regulation of Ty1 transposition and protects the genome from Ty1 integration upstream of tRNA genes. This is Cullin-8 (RTT101) from Saccharomyces cerevisiae (strain ATCC 204508 / S288c) (Baker's yeast).